A 271-amino-acid chain; its full sequence is Probable CAAX prenyl protease 2 (271 aa).

A run of 2 helical transmembrane segments spans residues 3–23 and 42–62; these read VYLI…TFPV and CISV…IIGP. Active-site proton donor/acceptor residues include glutamate 126 and histidine 160. The next 2 helical transmembrane spans lie at 174-194 and 236-256; these read AYIA…VFGW and IYYT…GITD.

This sequence belongs to the peptidase U48 family.

Its subcellular location is the endoplasmic reticulum membrane. The enzyme catalyses Hydrolyzes the peptide bond -P2-(S-farnesyl or geranylgeranyl)C-P1'-P2'-P3'-COOH where P1' and P2' are amino acids with aliphatic sidechains and P3' is any C-terminal residue.. Protease involved in the processing of a variety of prenylated proteins containing the C-terminal CAAX motif, where C is a cysteine modified with an isoprenoid lipid, A is an aliphatic amino acid and X is any C-terminal amino acid. Proteolytically removes the C-terminal three residues of farnesylated proteins, leaving the prenylated cysteine as the new C-terminus. In Schizosaccharomyces pombe (strain 972 / ATCC 24843) (Fission yeast), this protein is Probable CAAX prenyl protease 2.